We begin with the raw amino-acid sequence, 598 residues long: Aspartate--tRNA(Asp/Asn) ligase (598 aa).

Glu182 is an L-aspartate binding site. The segment at 206 to 209 (QIFK) is aspartate. Arg228 provides a ligand contact to L-aspartate. Residues 228-230 (RDE) and Gln237 each bind ATP. His456 contributes to the L-aspartate binding site. Glu490 contacts ATP. An L-aspartate-binding site is contributed by Arg497. 542-545 (GLDR) is an ATP binding site.

It belongs to the class-II aminoacyl-tRNA synthetase family. Type 1 subfamily. As to quaternary structure, homodimer.

The protein resides in the cytoplasm. It carries out the reaction tRNA(Asx) + L-aspartate + ATP = L-aspartyl-tRNA(Asx) + AMP + diphosphate. Functionally, aspartyl-tRNA synthetase with relaxed tRNA specificity since it is able to aspartylate not only its cognate tRNA(Asp) but also tRNA(Asn). Reaction proceeds in two steps: L-aspartate is first activated by ATP to form Asp-AMP and then transferred to the acceptor end of tRNA(Asp/Asn). The polypeptide is Aspartate--tRNA(Asp/Asn) ligase (Lachnoclostridium phytofermentans (strain ATCC 700394 / DSM 18823 / ISDg) (Clostridium phytofermentans)).